Reading from the N-terminus, the 385-residue chain is Cytochrome b (385 aa).

Transmembrane regions (helical) follow at residues 32-52, 76-98, 113-133, and 179-199; these read FGSL…TLAM, WFIR…AHMG, PWSI…MGYV, and FFAL…LHLI. Heme b-binding residues include H82 and H96. Heme b contacts are provided by H183 and H197. Residue H202 participates in a ubiquinone binding. 4 helical membrane passes run 225–245, 289–309, 321–341, and 348–368; these read YSFK…LFVF, LGGV…PIVD, ISKL…VLGQ, and FIVL…ILLP.

It belongs to the cytochrome b family. Fungal cytochrome b-c1 complex contains 10 subunits; 3 respiratory subunits, 2 core proteins and 5 low-molecular weight proteins. Cytochrome b-c1 complex is a homodimer. Heme b is required as a cofactor.

The protein localises to the mitochondrion inner membrane. Its function is as follows. Component of the ubiquinol-cytochrome c reductase complex (complex III or cytochrome b-c1 complex) that is part of the mitochondrial respiratory chain. The b-c1 complex mediates electron transfer from ubiquinol to cytochrome c. Contributes to the generation of a proton gradient across the mitochondrial membrane that is then used for ATP synthesis. This is Cytochrome b (COB) from Yarrowia lipolytica (strain CLIB 122 / E 150) (Yeast).